Reading from the N-terminus, the 411-residue chain is LL-diaminopimelate aminotransferase (411 aa).

Substrate-binding residues include tyrosine 15 and glycine 42. Pyridoxal 5'-phosphate-binding positions include tyrosine 72, 108–109 (SK), tyrosine 132, asparagine 187, tyrosine 218, and 246–248 (SFS). Substrate-binding residues include lysine 109, tyrosine 132, and asparagine 187. Lysine 249 is subject to N6-(pyridoxal phosphate)lysine. Pyridoxal 5'-phosphate contacts are provided by arginine 257 and asparagine 292. Substrate-binding residues include asparagine 292 and arginine 388.

It belongs to the class-I pyridoxal-phosphate-dependent aminotransferase family. LL-diaminopimelate aminotransferase subfamily. As to quaternary structure, homodimer. Pyridoxal 5'-phosphate serves as cofactor.

It carries out the reaction (2S,6S)-2,6-diaminopimelate + 2-oxoglutarate = (S)-2,3,4,5-tetrahydrodipicolinate + L-glutamate + H2O + H(+). Its pathway is amino-acid biosynthesis; L-lysine biosynthesis via DAP pathway; LL-2,6-diaminopimelate from (S)-tetrahydrodipicolinate (aminotransferase route): step 1/1. Involved in the synthesis of meso-diaminopimelate (m-DAP or DL-DAP), required for both lysine and peptidoglycan biosynthesis. Catalyzes the direct conversion of tetrahydrodipicolinate to LL-diaminopimelate. This Synechococcus elongatus (strain ATCC 33912 / PCC 7942 / FACHB-805) (Anacystis nidulans R2) protein is LL-diaminopimelate aminotransferase.